Here is a 332-residue protein sequence, read N- to C-terminus: Anthranilate phosphoribosyltransferase (332 aa).

5-phospho-alpha-D-ribose 1-diphosphate-binding positions include Gly-79, 82–83 (GD), Ser-87, 89–92 (NIST), 107–115 (KHGNRSVSS), and Ser-119. Anthranilate is bound at residue Gly-79. Residue Ser-91 participates in Mg(2+) binding. An anthranilate-binding site is contributed by Asn-110. An anthranilate-binding site is contributed by Arg-165. Residues Asp-223 and Glu-224 each contribute to the Mg(2+) site.

The protein belongs to the anthranilate phosphoribosyltransferase family. In terms of assembly, homodimer. Mg(2+) is required as a cofactor.

It catalyses the reaction N-(5-phospho-beta-D-ribosyl)anthranilate + diphosphate = 5-phospho-alpha-D-ribose 1-diphosphate + anthranilate. It participates in amino-acid biosynthesis; L-tryptophan biosynthesis; L-tryptophan from chorismate: step 2/5. In terms of biological role, catalyzes the transfer of the phosphoribosyl group of 5-phosphorylribose-1-pyrophosphate (PRPP) to anthranilate to yield N-(5'-phosphoribosyl)-anthranilate (PRA). The protein is Anthranilate phosphoribosyltransferase of Yersinia pseudotuberculosis serotype O:3 (strain YPIII).